The chain runs to 646 residues: Chaperone protein DnaK (646 aa).

Threonine 198 bears the Phosphothreonine; by autocatalysis mark. The segment at 603-646 is disordered; the sequence is EQAQQAGGAEGFDPNAFQGGDAGQQKADDGVVDAEFTEVKDDKK. Low complexity predominate over residues 618 to 627; it reads AFQGGDAGQQ.

This sequence belongs to the heat shock protein 70 family.

In terms of biological role, acts as a chaperone. The protein is Chaperone protein DnaK of Acinetobacter baumannii (strain ACICU).